The primary structure comprises 2586 residues: Vitellogenin (2586 aa).

An N-terminal signal peptide occupies residues 1-18; it reads MTTSTLLFVLAFVAGGLA. The region spanning 42-653 is the Vitellogenin domain; the sequence is YQPDKTYAYA…APGSFVPRAV (612 aa). Disulfide bonds link Cys-170-Cys-194 and Cys-2378-Cys-2515. The region spanning 2353–2516 is the VWFD domain; sequence RTATVVGGSE…AAWQEDRQCS (164 aa).

In terms of processing, glycosylated. May be modified covalently by lipidation. In terms of tissue distribution, expressed in the ovary and hepatopancrease of vitellogenic females. Not expressed in the muscle, heart and intestine of female or in the hepatopancrease of the male. Detected in the ovary and hemolymph of female (at protein level). Not detected in the female hepatopancreas or in the male hemolymph and testis (at protein level).

Precursor of the egg-yolk proteins that are sources of nutrients during embryonic development. The sequence is that of Vitellogenin from Penaeus merguiensis (Banana prawn).